The primary structure comprises 311 residues: Homoserine kinase (311 aa).

89 to 99 provides a ligand contact to ATP; that stretch reads PFARGLGSSAT.

The protein belongs to the GHMP kinase family. Homoserine kinase subfamily.

It localises to the cytoplasm. It catalyses the reaction L-homoserine + ATP = O-phospho-L-homoserine + ADP + H(+). The protein operates within amino-acid biosynthesis; L-threonine biosynthesis; L-threonine from L-aspartate: step 4/5. Catalyzes the ATP-dependent phosphorylation of L-homoserine to L-homoserine phosphate. The chain is Homoserine kinase from Halothermothrix orenii (strain H 168 / OCM 544 / DSM 9562).